We begin with the raw amino-acid sequence, 62 residues long: Large ribosomal subunit protein bL28 (62 aa).

Belongs to the bacterial ribosomal protein bL28 family.

This chain is Large ribosomal subunit protein bL28, found in Acidothermus cellulolyticus (strain ATCC 43068 / DSM 8971 / 11B).